The primary structure comprises 380 residues: Cytochrome b (380 aa).

The next 4 membrane-spanning stretches (helical) occupy residues 33 to 53 (FGSLLGLCLIAQILTGLFLAM), 77 to 98 (WLIRNLHANGASFFFICLYLHV), 113 to 133 (WNIGVVLLLLVMMTAFVGYVL), and 178 to 198 (FFAFHFLFPFIIAAMVLLHLL). 2 residues coordinate heme b: H83 and H97. Residues H182 and H196 each coordinate heme b. H201 contributes to the a ubiquinone binding site. A run of 4 helical transmembrane segments spans residues 226–246 (YKDLFGFVILLLALSILTLFS), 288–308 (LGGVLALLASILILMVVPLLH), 320–340 (LTQILFWTLVADVAILTWIGG), and 347–367 (FITVGQVASVLYFALFLILIP).

It belongs to the cytochrome b family. As to quaternary structure, the cytochrome bc1 complex contains 3 respiratory subunits (MT-CYB, CYC1 and UQCRFS1), 2 core proteins (UQCRC1 and UQCRC2) and probably 6 low-molecular weight proteins. Heme b serves as cofactor.

It is found in the mitochondrion inner membrane. In terms of biological role, component of the ubiquinol-cytochrome c reductase complex (complex III or cytochrome b-c1 complex) that is part of the mitochondrial respiratory chain. The b-c1 complex mediates electron transfer from ubiquinol to cytochrome c. Contributes to the generation of a proton gradient across the mitochondrial membrane that is then used for ATP synthesis. The sequence is that of Cytochrome b (mt-cyb) from Allocyttus niger (Black oreo dory).